The primary structure comprises 65 residues: Beta-defensin 41 (65 aa).

The N-terminal stretch at 1–19 (MKFHLFFFILLFGATILTA) is a signal peptide. 3 cysteine pairs are disulfide-bonded: Cys35–Cys63, Cys42–Cys56, and Cys46–Cys64.

Belongs to the beta-defensin family. Isoform 2 is epididymis-specific and expressed mainly in the proximal caput.

Its subcellular location is the secreted. Its function is as follows. Has bactericidal activity. Functionally, isoform 2 may play a role in the antimicrobial protection of sperm and urogenital tract epithelia. The sequence is that of Beta-defensin 41 from Mus musculus (Mouse).